A 243-amino-acid polypeptide reads, in one-letter code: R-spondin-2 (243 aa).

Positions 1 to 23 are cleaved as a signal peptide; it reads MRFCLFSFALIILNCMDYSQCQG. 11 disulfide bridges follow: Cys-40–Cys-46, Cys-43–Cys-52, Cys-55–Cys-74, Cys-78–Cys-93, Cys-96–Cys-104, Cys-101–Cys-110, Cys-113–Cys-124, Cys-128–Cys-141, Cys-145–Cys-187, Cys-156–Cys-163, and Cys-196–Cys-203. The FU repeat unit spans residues 90 to 134; that stretch reads MNRCARCRIENCDSCFSKDFCTKCKVGFYLHRGRCFDECPDGFAP. In terms of domain architecture, TSP type-1 spans 144-204; sequence GCEVGHWSEW…RCKMAMRHCP (61 aa). A glycan (N-linked (GlcNAc...) asparagine) is linked at Asn-160. Residues 204–224 show a composition bias toward basic residues; sequence PGGKRTPKAKEKRNKKKRRKL. Positions 204-243 are disordered; sequence PGGKRTPKAKEKRNKKKRRKLIERAQEQHSVFLATDRVNQ.

The protein belongs to the R-spondin family. In terms of assembly, interacts with WNT1. Binds heparin. Interacts with LGR4, LGR5 and LGR6.

The protein localises to the secreted. In terms of biological role, activator of the canonical Wnt signaling pathway by acting as a ligand for LGR4-6 receptors. Upon binding to LGR4-6 (LGR4, LGR5 or LGR6), LGR4-6 associate with phosphorylated LRP6 and frizzled receptors that are activated by extracellular Wnt receptors, triggering the canonical Wnt signaling pathway to increase expression of target genes. Also regulates the canonical Wnt/beta-catenin-dependent pathway and non-canonical Wnt signaling by acting as an inhibitor of ZNRF3, an important regulator of the Wnt signaling pathway. Probably also acts as a ligand for frizzled and LRP receptors. During embryonic development, plays a crucial role in limb specification, amplifying the Wnt signaling pathway independently of LGR4-6 receptors, possibly by acting as a direct antagonistic ligand to RNF43 and ZNRF3, hence governing the number of limbs an embryo should form. This is R-spondin-2 (Rspo2) from Mus musculus (Mouse).